The following is a 280-amino-acid chain: Pantothenate synthetase (280 aa).

26–33 (MGNLHEGH) is an ATP binding site. His-33 acts as the Proton donor in catalysis. Residue Gln-57 participates in (R)-pantoate binding. Gln-57 is a binding site for beta-alanine. 145–148 (GKKD) serves as a coordination point for ATP. (R)-pantoate is bound at residue Gln-151. Residues Val-174 and 182–185 (LSSR) each bind ATP.

The protein belongs to the pantothenate synthetase family. Homodimer.

The protein resides in the cytoplasm. It carries out the reaction (R)-pantoate + beta-alanine + ATP = (R)-pantothenate + AMP + diphosphate + H(+). It participates in cofactor biosynthesis; (R)-pantothenate biosynthesis; (R)-pantothenate from (R)-pantoate and beta-alanine: step 1/1. In terms of biological role, catalyzes the condensation of pantoate with beta-alanine in an ATP-dependent reaction via a pantoyl-adenylate intermediate. This chain is Pantothenate synthetase, found in Bordetella bronchiseptica (strain ATCC BAA-588 / NCTC 13252 / RB50) (Alcaligenes bronchisepticus).